The primary structure comprises 1173 residues: MPSTVLWATDIFGKVFTLSTDGQQWAPCKNGHVEFKRVSAVRSCCWGVGCNHQIYLYVHASDLPIRYQEETYENQRWNPVDGYCEKLLPSDRWQWSDVTGLRHQQLESFMLPSPHWEWESDWYVDENIGGEPTEKGGWTYAIDFPATYTKDKKWNSCVRRRRWIRYRKYKSRNTWAKIPSHEDNKKLPDPFNDITVGGWEITDEPVGRLSVWAASLQGKVWYREDVCQNIPEGSSWTELETPSEVIQISCGPNDLLWASLWEGQAMVREGINRNNPKGSSWTIVEAPTPENGIMHVSVGVNVVWAVTKDRKVWFRRGVNSHNPCGTGWIEMVGEMAMVDVGLNDQVFGVGYEDRAVYFRQGVTPSELSGKAWKSIVVPRGNERSNSESPNSLLSAGCFFGDEIKEHSDSPIPSDIESSSEPEQSAVQENSSDSSEPADVGPSQQDEPKDEELSAVLELDGQQKAGSSLSKDSGEDSAHSAGPVPKAGAPKWTSIDLLEARINPARASGDMTGLSTLGIFTAGEEESFVCETHPLWTWVSGGGCLVESHTPLKWFTLQTGLSASMQSLSLSITPAHTAAWRKQIFDQLSERSKRELDSFRHYEQAVEQSVWVKTGALQWYRDWKPNKWIDVRVALEQLTGTDGSRDSILFVYYTHGEEKKYIHIFLNEVTILVPVANEAKHSFAIYTPEKTKQRWPIRLAAATEQEMHDWLVLLSMSCYESRKLQGAPSSQAIWSVTCKGDIFVSEPKADLESVTNGRSCDQMFWRQIGGHLRMVESSSNGVVWGLGYDHTAWVYTGGYGGGFFPGIASSTDNIFPQTDTKCVYIYENQRWNPITGYSSTGLPTDRYMWSDASGLQECTKTNTKPPSPQWTWVSDWYIDFNVPGGTDREGWQFAADFPASYHGYKTIKDFVRRRRWARKCRIVTSGPWLEVPPICLWDISISPSSGAHNSESIALWAISNKGDVLCRLGVTKQSPSGSSWLHVGTDQPFISVSVGGCLQVWAIARDGSAFYRGSVSPAQPAGDCWYHIPSPHKQKLQQVSVGHTSVFVVDENGNLWFRHGITPTYPQGTTWEHMSNNIRKVSVGPLDQIWVIADKVQGSHSLSCGTVCHRLGVQPMQLKGHSWDYGIGGGWEHITVRGNRADMAKTLQPKENATEKPDPQEENGESAFSHIANC.

TECPR repeat units lie at residues leucine 209–glutamate 240, aspartate 254–glutamate 285, asparagine 301–valine 332, and aspartate 344–valine 376. The tract at residues isoleucine 403–proline 489 is disordered. Residues serine 409–glutamate 422 show a composition bias toward low complexity. The span at serine 424 to serine 434 shows a compositional bias: polar residues. A PH domain is found at valine 609–tyrosine 718. 5 TECPR repeats span residues glutamine 730–arginine 757, isoleucine 952–glycine 983, leucine 997–proline 1028, threonine 1043–serine 1074, and aspartate 1086–isoleucine 1126. Positions glutamine 1147–cysteine 1173 are disordered.

The protein belongs to the TECPR1 family.

The protein localises to the cytoplasmic vesicle. The protein resides in the autophagosome membrane. Its subcellular location is the lysosome membrane. Functionally, tethering factor involved in autophagy. Involved in autophagosome maturation by promoting the autophagosome fusion with lysosomes. Binds phosphatidylinositol-3-phosphate (PtdIns(3)P) present at the surface of autophagosomes. The chain is Tectonin beta-propeller repeat-containing protein 1 (tecpr1) from Xenopus tropicalis (Western clawed frog).